Reading from the N-terminus, the 159-residue chain is Small ribosomal subunit protein bS6 (159 aa).

Residues 93 to 151 (VDEHEEGPSAMMRKADRDRERDDRGPREGGFRGDREGRGDREGGGFRGDRGPRRPREDA) show a composition bias toward basic and acidic residues. The tract at residues 93–159 (VDEHEEGPSA…DADTAAASEE (67 aa)) is disordered.

The protein belongs to the bacterial ribosomal protein bS6 family.

Its function is as follows. Binds together with bS18 to 16S ribosomal RNA. This is Small ribosomal subunit protein bS6 from Rhodopseudomonas palustris (strain HaA2).